A 607-amino-acid chain; its full sequence is MAQIVRQSKFRHVFCKPVKHESCMSDIRVTEITWDSLFCDVNPKFIAFINRGAGGPFMVIPVNKIGRVDKDYPFVDAHKAPCLEVAWSPFNDNVIASCSEDTTCKVWVIPDRGLNRNLSEPAVELTGHQKRVNTIAWHPVANNVLLTAGGENVMFMWNVGTGEALLEISGHPDQIWSINFNFDGSQFVTTCKDKKIRILDSHTGEVVHEGMGHEGVKPQRAIFVKDGLILSTGFTKRSERLYALRAPEDLSTPIVEEELDTSNGVVFPFYDEDSGLVYLVGKGDCAIRYYEVNNDAPYVHYINTYTTNEPQRAVGFQSKRGMSSEENEINRIYKLTTKGVVDILQFFVPRKSDLFQHDLYPDTRSTIPALTAEEFMEGKNAAPNRQPVNAAAAAAAAKPKVQVAKKANILSTLAPTAAESVPTQSYSERPPSSQQPSPRPSASPRPRPVVDDDMGIVTMREAPPSRPASSRASRTEIPPKEESKVDPMKPKQAVQLKSRAARDEPGGGAQTAGQRRAAAELERIKRDQSRTADEDNTLAPPPSSSRASASPRGSVSAASDVGHVPQNMDELLEDLMKMKAVLRQHERRIRMLEEEIADRNMSNAYSF.

WD repeat units lie at residues 77-117 (AHKA…LNRN), 127-167 (GHQK…ALLE), and 170-209 (GHPD…VVHE). Positions 415–564 (PTAAESVPTQ…VSAASDVGHV (150 aa)) are disordered. The segment covering 424–436 (QSYSERPPSSQQP) has biased composition (low complexity). The span at 437–447 (SPRPSASPRPR) shows a compositional bias: pro residues. Composition is skewed to basic and acidic residues over residues 473–489 (SRTE…DPMK) and 517–533 (AAAE…RTAD). A compositionally biased stretch (low complexity) spans 544-559 (SSRASASPRGSVSAAS). A coiled-coil region spans residues 563–602 (HVPQNMDELLEDLMKMKAVLRQHERRIRMLEEEIADRNMS).

Belongs to the WD repeat coronin family.

The protein localises to the cytoplasm. It localises to the cytoskeleton. Required to direct the migration of Q neuroblasts along the anterior axis of the body during larval development. This is dependent on its asymmetric expression in Q neuroblasts. The chain is Coronin-like protein cor-1 (cor-1) from Caenorhabditis elegans.